Here is a 728-residue protein sequence, read N- to C-terminus: Elongation factor 2 (728 aa).

Residues 19 to 261 (EHIRNIAIAA…MVCEHFPNPV (243 aa)) enclose the tr-type G domain. GTP is bound by residues 28–35 (AHVDHGKT), 94–98 (DTPGH), and 148–151 (NKVD). His596 carries the diphthamide modification.

The protein belongs to the TRAFAC class translation factor GTPase superfamily. Classic translation factor GTPase family. EF-G/EF-2 subfamily.

The protein localises to the cytoplasm. Its function is as follows. Catalyzes the GTP-dependent ribosomal translocation step during translation elongation. During this step, the ribosome changes from the pre-translocational (PRE) to the post-translocational (POST) state as the newly formed A-site-bound peptidyl-tRNA and P-site-bound deacylated tRNA move to the P and E sites, respectively. Catalyzes the coordinated movement of the two tRNA molecules, the mRNA and conformational changes in the ribosome. This is Elongation factor 2 from Haloarcula marismortui (strain ATCC 43049 / DSM 3752 / JCM 8966 / VKM B-1809) (Halobacterium marismortui).